The following is a 91-amino-acid chain: MQRNLVVLLFLGMVALSSCGFREKHFQRFVKYAVPESTLRTVLQTVVHKVGKTQFGCSAYQGYCDDHCQDIEKKEGFCHGFKCKCGIPMGF.

An N-terminal signal peptide occupies residues 1-19; it reads MQRNLVVLLFLGMVALSSC. The 38-residue stretch at 54 to 91 folds into the BetaSPN-type CS-alpha/beta domain; sequence QFGCSAYQGYCDDHCQDIEKKEGFCHGFKCKCGIPMGF. 3 disulfides stabilise this stretch: Cys57/Cys78, Cys64/Cys83, and Cys68/Cys85.

The protein belongs to the long chain scorpion toxin family. Class 1 subfamily. Expressed by the venom gland.

It localises to the secreted. Has a low affinity binding to potassium channels of rat brain synaptosomes. Displays weak antibacterial activity against Stenotrophomonas sp. Strongly inhibits the development of the Plasmodium berghei ookinetes. Displays slight hemolytic effect on mouse erythrocytes. Induces cytolysis on Xenopus oocytes at high concentrations. Is not toxic towards mice and towards the insect Tenebrio molitor. The sequence is that of Potassium channel toxin MeuTXK-beta-2 from Mesobuthus eupeus (Lesser Asian scorpion).